The sequence spans 148 residues: Protein Smg homolog (148 aa).

It belongs to the Smg family.

This is Protein Smg homolog from Thiobacillus denitrificans (strain ATCC 25259 / T1).